A 227-amino-acid chain; its full sequence is Killer cell lectin-like receptor subfamily B member 1A (227 aa).

The Cytoplasmic segment spans residues 1–45 (MDTARVYFGLKPPRTPGAWHESPPSLPPDACRCPRSHRLALKLSC). Positions 31–34 (CRCP) match the LCK-binding motif motif. Residues 46–66 (AGLILLVVTLIGMSVLVRVLI) traverse the membrane as a helical; Signal-anchor for type II membrane protein segment. Residues 67 to 227 (QKPSIEKCYV…TLSNYVGYGH (161 aa)) lie on the Extracellular side of the membrane. The 120-residue stretch at 93–212 (ECPQDWLSHR…NSDNRWICQK (120 aa)) folds into the C-type lectin domain. 3 disulfides stabilise this stretch: Cys-94–Cys-105, Cys-122–Cys-210, and Cys-189–Cys-202.

In terms of assembly, homodimer; disulfide-linked. Interacts with tyrosine kinase LCK. Expressed in natural killer cells.

It localises to the membrane. Functionally, plays a stimulatory role on natural killer (NK) cell cytotoxicity. In Mus musculus (Mouse), this protein is Killer cell lectin-like receptor subfamily B member 1A (Klrb1a).